We begin with the raw amino-acid sequence, 61 residues long: Small ribosomal subunit protein uS14 (61 aa).

Residues Cys24, Cys27, Cys40, and Cys43 each coordinate Zn(2+).

Belongs to the universal ribosomal protein uS14 family. Zinc-binding uS14 subfamily. As to quaternary structure, part of the 30S ribosomal subunit. Contacts proteins S3 and S10. Zn(2+) is required as a cofactor.

Its function is as follows. Binds 16S rRNA, required for the assembly of 30S particles and may also be responsible for determining the conformation of the 16S rRNA at the A site. The chain is Small ribosomal subunit protein uS14 from Rhodococcus erythropolis (strain PR4 / NBRC 100887).